Here is a 195-residue protein sequence, read N- to C-terminus: Phenoloxidase subunit 1 (195 aa).

His10 is a Cu cation binding site. N-linked (GlcNAc...) asparagine glycans are attached at residues Asn77, Asn97, and Asn98.

Belongs to the tyrosinase family. Heterodimer. It depends on Cu(2+) as a cofactor.

It is found in the secreted. It carries out the reaction 2 L-dopa + O2 = 2 L-dopaquinone + 2 H2O. The catalysed reaction is L-tyrosine + O2 = L-dopaquinone + H2O. Its function is as follows. This is a copper-containing oxidase that functions in the formation of pigments such as melanins and other polyphenolic compounds. Catalyzes the rate-limiting conversions of tyrosine to DOPA, DOPA to DOPA-quinone and possibly 5,6 dihydroxyindole to indole-5'6 quinone. This Simulium damnosum (Black fly) protein is Phenoloxidase subunit 1.